The sequence spans 134 residues: Protein NrdI (134 aa).

The protein belongs to the NrdI family.

In terms of biological role, probably involved in ribonucleotide reductase function. The sequence is that of Protein NrdI from Yersinia enterocolitica serotype O:8 / biotype 1B (strain NCTC 13174 / 8081).